Consider the following 444-residue polypeptide: Ribosomal protein uS12 methylthiotransferase RimO (444 aa).

The 117-residue stretch at 2–118 (PSIGLLSLGC…IVEVVNHALE (117 aa)) folds into the MTTase N-terminal domain. Cys11, Cys47, Cys81, Cys156, Cys160, and Cys163 together coordinate [4Fe-4S] cluster. One can recognise a Radical SAM core domain in the interval 142–372 (STPSYTAYVK…MKLQREISLS (231 aa)). One can recognise a TRAM domain in the interval 375-444 (QKRIGQEIEV…EYDLMGELAQ (70 aa)).

This sequence belongs to the methylthiotransferase family. RimO subfamily. It depends on [4Fe-4S] cluster as a cofactor.

The protein localises to the cytoplasm. The enzyme catalyses L-aspartate(89)-[ribosomal protein uS12]-hydrogen + (sulfur carrier)-SH + AH2 + 2 S-adenosyl-L-methionine = 3-methylsulfanyl-L-aspartate(89)-[ribosomal protein uS12]-hydrogen + (sulfur carrier)-H + 5'-deoxyadenosine + L-methionine + A + S-adenosyl-L-homocysteine + 2 H(+). Functionally, catalyzes the methylthiolation of an aspartic acid residue of ribosomal protein uS12. The sequence is that of Ribosomal protein uS12 methylthiotransferase RimO from Desulforamulus reducens (strain ATCC BAA-1160 / DSM 100696 / MI-1) (Desulfotomaculum reducens).